Reading from the N-terminus, the 194-residue chain is Naphthalene 1,2-dioxygenase system, small oxygenase component (194 aa).

The protein belongs to the bacterial ring-hydroxylating dioxygenase beta subunit family. The naphthalene dioxygenase (NDO) multicomponent enzyme system is composed of an electron transfer component and a dioxygenase component (iron sulfur protein (ISP)). The electron transfer component is composed of a ferredoxin reductase (NdoR) and a ferredoxin (NdoA), and the dioxygenase component is formed of a heterohexamer (trimer of heterodimers) of three large alpha subunits (NdoB) and three small beta subunits (NdoC).

It functions in the pathway aromatic compound metabolism; naphthalene degradation. Functionally, component of the naphthalene dioxygenase (NDO) multicomponent enzyme system which catalyzes the incorporation of both atoms of molecular oxygen into naphthalene to form cis-(1R,2S)-dihydroxy-1,2-dihydronaphthalene. The beta subunit seems to have a structural role in the holoenzyme. Also able to catalyze the cis-dihydroxylation of biphenyl and phenanthrene. In Pseudomonas putida (Arthrobacter siderocapsulatus), this protein is Naphthalene 1,2-dioxygenase system, small oxygenase component.